Here is a 376-residue protein sequence, read N- to C-terminus: Cobalt-precorrin-5B C(1)-methyltransferase (376 aa).

This sequence belongs to the CbiD family.

The enzyme catalyses Co-precorrin-5B + S-adenosyl-L-methionine = Co-precorrin-6A + S-adenosyl-L-homocysteine. Its pathway is cofactor biosynthesis; adenosylcobalamin biosynthesis; cob(II)yrinate a,c-diamide from sirohydrochlorin (anaerobic route): step 6/10. In terms of biological role, catalyzes the methylation of C-1 in cobalt-precorrin-5B to form cobalt-precorrin-6A. In Bradyrhizobium sp. (strain BTAi1 / ATCC BAA-1182), this protein is Cobalt-precorrin-5B C(1)-methyltransferase.